The sequence spans 86 residues: MANIKSQQKRNKTNERARLRNKSVKSSLRTAVRAFREAAHAGDKEKAAELLVSTNRKLDKAASKGVIHKNQAANKKSALAQALNKL.

The disordered stretch occupies residues 1–25 (MANIKSQQKRNKTNERARLRNKSVK).

This sequence belongs to the bacterial ribosomal protein bS20 family.

Binds directly to 16S ribosomal RNA. This is Small ribosomal subunit protein bS20 from Mycobacterium avium (strain 104).